We begin with the raw amino-acid sequence, 226 residues long: Lipoprotein signal peptidase (226 aa).

Helical transmembrane passes span 12 to 32, 69 to 89, and 103 to 123; these read KVVA…KIWV, FLSL…AKLV, and SLII…GVIF. Catalysis depends on residues Asp150 and Asp184. A helical membrane pass occupies residues 173–193; that stretch reads FVFFHPVFNFADSCISIGLIL.

It belongs to the peptidase A8 family.

The protein resides in the cell inner membrane. The enzyme catalyses Release of signal peptides from bacterial membrane prolipoproteins. Hydrolyzes -Xaa-Yaa-Zaa-|-(S,diacylglyceryl)Cys-, in which Xaa is hydrophobic (preferably Leu), and Yaa (Ala or Ser) and Zaa (Gly or Ala) have small, neutral side chains.. Its pathway is protein modification; lipoprotein biosynthesis (signal peptide cleavage). Functionally, this protein specifically catalyzes the removal of signal peptides from prolipoproteins. The protein is Lipoprotein signal peptidase of Porphyromonas gingivalis (strain ATCC 33277 / DSM 20709 / CIP 103683 / JCM 12257 / NCTC 11834 / 2561).